Consider the following 315-residue polypeptide: Protein sprouty homolog 2 (315 aa).

Over residues 1–15 the composition is skewed to polar residues; sequence MEARAQSGNGSQPLL. The disordered stretch occupies residues 1–140; it reads MEARAQSGNG…SEQRLLGSSF (140 aa). The span at 20–32 shows a compositional bias: basic and acidic residues; the sequence is DGGRPRGEPDPRD. Over residues 108 to 140 the composition is skewed to low complexity; sequence SRSISTVSSGSRSSTRTSTSSSSSEQRLLGSSF. The segment at 118 to 315 is required for interaction with CAV1; the sequence is SRSSTRTSTS…VPRRNFEKPT (198 aa). An SPR domain is found at 177–291; the sequence is RCEDCGKCKC…CYDRVNRPGC (115 aa). The interval 178–315 is required for interaction with TESK1; the sequence is CEDCGKCKCK…VPRRNFEKPT (138 aa).

This sequence belongs to the sprouty family. In terms of assembly, forms heterodimers with SPRY1. Forms a tripartite complex containing GAB1, METTL13 and SPRY2. Within the complex interacts with METTL13. Interacts with RAF1. Interacts (via C-terminus) with TESK1 (via C-terminus); the interaction disrupts SPRY2 interaction with GRB2, potentially via disruption of SPRY2 serine dephosphorylation. Interacts with PPP2R1A/PP2A-A and PPP2CA/PP2A-C; the interaction with PPP2CA/PP2A-C is inhibited by interaction with TESK1, possibly by vesicular sequestration of SPRY2. Inhibition of the interaction with the serine/threonine-protein phosphatase 2A (PP2A) holoenzyme results in loss of PP2A-mediated dephosphorylation, resulting in the loss of SPRY2 interaction with GRB2. Interacts with GRB2. Interacts with CBL/C-CBL; the interaction inhibits CBL-mediated ubiquitination of EGFR. Interacts (via C-terminus) with CAV1 (via C-terminus). Cleaved at Pro-144 by the prolyl endopeptidase FAP (seprase) activity (in vitro).

It is found in the cytoplasm. It localises to the cytoskeleton. The protein resides in the cell projection. The protein localises to the ruffle membrane. Its function is as follows. Antagonist of fibroblast growth factor (FGF) pathways via inhibition of FGF-mediated phosphorylation of ERK1/2. Thereby acts as an antagonist of FGF-induced retinal lens fiber differentiation, may inhibit limb bud outgrowth and may negatively modulate respiratory organogenesis. Inhibits TGFB-induced epithelial-to-mesenchymal transition in retinal lens epithelial cells. Inhibits CBL/C-CBL-mediated EGFR ubiquitination. This is Protein sprouty homolog 2 (SPRY2) from Pongo abelii (Sumatran orangutan).